A 328-amino-acid polypeptide reads, in one-letter code: GTP 3',8-cyclase (328 aa).

Residues 1 to 229 (MNQVDYLRIS…ESQVRGAGPA (229 aa)) enclose the Radical SAM core domain. Position 8 (Arg-8) interacts with GTP. Cys-15 and Cys-19 together coordinate [4Fe-4S] cluster. Tyr-21 contributes to the S-adenosyl-L-methionine binding site. Residue Cys-22 coordinates [4Fe-4S] cluster. GTP is bound at residue Arg-60. Gly-64 is an S-adenosyl-L-methionine binding site. GTP is bound at residue Thr-91. Position 115 (Ser-115) interacts with S-adenosyl-L-methionine. Lys-155 provides a ligand contact to GTP. Residue Met-189 participates in S-adenosyl-L-methionine binding. Cys-252 and Cys-255 together coordinate [4Fe-4S] cluster. 257–259 (RMR) contributes to the GTP binding site. Cys-269 is a binding site for [4Fe-4S] cluster.

The protein belongs to the radical SAM superfamily. MoaA family. In terms of assembly, monomer and homodimer. [4Fe-4S] cluster serves as cofactor.

It catalyses the reaction GTP + AH2 + S-adenosyl-L-methionine = (8S)-3',8-cyclo-7,8-dihydroguanosine 5'-triphosphate + 5'-deoxyadenosine + L-methionine + A + H(+). It functions in the pathway cofactor biosynthesis; molybdopterin biosynthesis. Catalyzes the cyclization of GTP to (8S)-3',8-cyclo-7,8-dihydroguanosine 5'-triphosphate. This chain is GTP 3',8-cyclase, found in Nostoc punctiforme (strain ATCC 29133 / PCC 73102).